The chain runs to 590 residues: Urease subunit alpha (590 aa).

In terms of domain architecture, Urease spans 134-590; sequence GGIDSHIHFI…LPLAQRYFLF (457 aa). Positions 139, 141, and 222 each coordinate Ni(2+). Residue Lys222 is modified to N6-carboxylysine. Residue His224 coordinates substrate. His251 and His277 together coordinate Ni(2+). Catalysis depends on His325, which acts as the Proton donor. A Ni(2+)-binding site is contributed by Asp365. Residues 388–416 form a disordered region; sequence QQRGWLSPPAAGQGAGLSSAAGQGVDHDT. Low complexity predominate over residues 393 to 411; sequence LSPPAAGQGAGLSSAAGQG.

Belongs to the metallo-dependent hydrolases superfamily. Urease alpha subunit family. Heterotrimer of UreA (gamma), UreB (beta) and UreC (alpha) subunits. Three heterotrimers associate to form the active enzyme. Requires Ni cation as cofactor. Post-translationally, carboxylation allows a single lysine to coordinate two nickel ions.

The protein localises to the cytoplasm. The catalysed reaction is urea + 2 H2O + H(+) = hydrogencarbonate + 2 NH4(+). The protein operates within nitrogen metabolism; urea degradation; CO(2) and NH(3) from urea (urease route): step 1/1. This is Urease subunit alpha from Verminephrobacter eiseniae (strain EF01-2).